We begin with the raw amino-acid sequence, 202 residues long: Heat shock 22 kDa protein, mitochondrial (202 aa).

Residues 1–31 constitute a mitochondrion transit peptide; the sequence is MASSLALKRFLSSGLLSSSFLRPVASSASRS. Residues 94–202 enclose the sHSP domain; the sequence is VLSAASRRGW…RNNVINVKVD (109 aa).

Belongs to the small heat shock protein (HSP20) family.

It localises to the mitochondrion. The polypeptide is Heat shock 22 kDa protein, mitochondrial (HSP22) (Pisum sativum (Garden pea)).